Here is a 582-residue protein sequence, read N- to C-terminus: ATP-dependent lipid A-core flippase (582 aa).

5 helical membrane-spanning segments follow: residues 16-36 (LWPM…ALII), 63-83 (VLLW…ASGF), 153-173 (IIGL…ILIV), 253-273 (PIIQ…ASFP), and 275-295 (VMET…IALM). One can recognise an ABC transmembrane type-1 domain in the interval 28 to 310 (AVAAIALIIN…LTNVNAQFQR (283 aa)). The 237-residue stretch at 342-578 (LEFRQVNFAY…NGAYAQLHRM (237 aa)) folds into the ABC transporter domain. 376–383 (GRSGSGKS) lines the ATP pocket.

The protein belongs to the ABC transporter superfamily. Lipid exporter (TC 3.A.1.106) family. Homodimer.

The protein localises to the cell inner membrane. It catalyses the reaction ATP + H2O + lipid A-core oligosaccharideSide 1 = ADP + phosphate + lipid A-core oligosaccharideSide 2.. In terms of biological role, involved in lipopolysaccharide (LPS) biosynthesis. Translocates lipid A-core from the inner to the outer leaflet of the inner membrane. Transmembrane domains (TMD) form a pore in the inner membrane and the ATP-binding domain (NBD) is responsible for energy generation. The protein is ATP-dependent lipid A-core flippase of Pectobacterium atrosepticum (strain SCRI 1043 / ATCC BAA-672) (Erwinia carotovora subsp. atroseptica).